A 123-amino-acid chain; its full sequence is Glycine cleavage system H protein (123 aa).

One can recognise a Lipoyl-binding domain in the interval H23–E104. K64 is subject to N6-lipoyllysine.

It belongs to the GcvH family. As to quaternary structure, the glycine cleavage system is composed of four proteins: P, T, L and H. The cofactor is (R)-lipoate.

In terms of biological role, the glycine cleavage system catalyzes the degradation of glycine. The H protein shuttles the methylamine group of glycine from the P protein to the T protein. The polypeptide is Glycine cleavage system H protein (Methylobacillus flagellatus (strain ATCC 51484 / DSM 6875 / VKM B-1610 / KT)).